A 1427-amino-acid polypeptide reads, in one-letter code: ATP-binding cassette transporter abc1 (1427 aa).

Residues 26–46 (LLLFYLSLFSLTNLFLIQKLF) form a helical membrane-spanning segment. Asparagine 49 carries N-linked (GlcNAc...) asparagine glycosylation. 9 helical membrane-spanning segments follow: residues 63–83 (CLLE…SFYL), 87–107 (AVWW…NILS), 115–135 (LFSW…LISI), 155–175 (LLLP…PLFF), 197–217 (CSIF…WKSW), 262–282 (ILLM…TPLA), 298–318 (GNSP…ASVV), 345–367 (VLTS…YVYN), and 397–417 (MYFL…LAIL). An ABC transmembrane type-1 1 domain is found at 262-549 (ILLMVFLSVL…LASVSRQFIQ (288 aa)). N-linked (GlcNAc...) asparagine glycosylation occurs at asparagine 437. The next 2 membrane-spanning stretches (helical) occupy residues 489–509 (IIFK…TFAI) and 513–533 (IMGH…FGLL). Asparagine 567, asparagine 581, and asparagine 601 each carry an N-linked (GlcNAc...) asparagine glycan. Residues 579 to 807 (FENTSLSWSP…PSTFFSSNTK (229 aa)) enclose the ABC transporter 1 domain. The helical transmembrane segment at 609 to 629 (FTLVVGSTGSGKSTLAMALLG) threads the bilayer. Position 614-621 (614-621 (GSTGSGKS)) interacts with ATP. N-linked (GlcNAc...) asparagine glycans are attached at residues asparagine 658 and asparagine 703. The chain crosses the membrane as a helical span at residues 760-780 (IILFTHNVSLCLPIAENVIVL). N-linked (GlcNAc...) asparagine glycans are attached at residues asparagine 782 and asparagine 842. In terms of domain architecture, ABC transmembrane type-1 2 spans 862 to 1142 (ILGSILLVMM…FVRANNEILT (281 aa)). 3 consecutive transmembrane segments (helical) span residues 866-886 (ILLV…IALW), 896-916 (LPSS…YFLM), and 973-993 (LLWA…ITML). The N-linked (GlcNAc...) asparagine glycan is linked to asparagine 994. The next 3 membrane-spanning stretches (helical) occupy residues 995–1015 (VTLV…LVYL), 1086–1106 (LAIR…LIAL), and 1114–1134 (GLVG…LVFV). N-linked (GlcNAc...) asparagine glycosylation is found at asparagine 1161 and asparagine 1184. An ABC transporter 2 domain is found at 1180-1422 (VSIKNLTVSY…RRAFWKMCKE (243 aa)). 1214 to 1221 (GRTGSGKS) serves as a coordination point for ATP. The helical transmembrane segment at 1223–1243 (MGLTLLRFTMIMSGAVEVDGI) threads the bilayer. A glycan (N-linked (GlcNAc...) asparagine) is linked at asparagine 1324.

The protein belongs to the ABC transporter superfamily. ABCC family. Conjugate transporter (TC 3.A.1.208) subfamily.

It localises to the membrane. This is ATP-binding cassette transporter abc1 (abc1) from Schizosaccharomyces pombe (strain 972 / ATCC 24843) (Fission yeast).